Reading from the N-terminus, the 593-residue chain is Probable ubiquitin carboxyl-terminal hydrolase 4 (593 aa).

One can recognise a USP domain in the interval 227–573; sequence IGLTNLGNTC…SSYILFYKRS (347 aa). C236 (nucleophile) is an active-site residue. Phosphoserine is present on residues S338 and S343. H530 acts as the Proton acceptor in catalysis.

It belongs to the peptidase C19 family. In terms of assembly, interacts with sfp47.

It is found in the cytoplasm. The protein resides in the endosome. It catalyses the reaction Thiol-dependent hydrolysis of ester, thioester, amide, peptide and isopeptide bonds formed by the C-terminal Gly of ubiquitin (a 76-residue protein attached to proteins as an intracellular targeting signal).. Its function is as follows. Has an ATP-independent isopeptidase activity, cleaving at the C-terminus of the ubiquitin moiety. Acts late in the proteolytic pathway in conjunction with the 26S proteasome. Plays a role in avoiding DNA overreplication. The protein is Probable ubiquitin carboxyl-terminal hydrolase 4 (ubp4) of Schizosaccharomyces pombe (strain 972 / ATCC 24843) (Fission yeast).